Consider the following 1278-residue polypeptide: Sterol regulatory element-binding protein cleavage-activating protein (1278 aa).

At 1 to 18 (MTLTERLREKISQAFYNH) the chain is on the cytoplasmic side. A helical membrane pass occupies residues 19–39 (GLFCASYPIPIILFTGLCILA). The Lumenal portion of the chain corresponds to 40–279 (CCYPLLKLPL…SLVHVHFKEE (240 aa)). Residues 46 to 284 (KLPLPGTGPV…HFKEEIGIAE (239 aa)) form a loop-1 region. The segment at 60–80 (PVKDYSPPPLTSDHKPGEPNE) is disordered. An N-linked (GlcNAc...) asparagine glycan is attached at N263. A helical transmembrane segment spans residues 280-300 (IGIAELIPLVTTYIILFAYIY). The SSD domain occupies 284–442 (ELIPLVTTYI…MLFFTTVLSI (159 aa)). Topologically, residues 301-312 (FSTRKIDMVKSK) are cytoplasmic. A helical membrane pass occupies residues 313–333 (WGLALAAVVTVLSSLLMSVGL). Residues 334-344 (CTLFGLTPTLN) lie on the Lumenal side of the membrane. Residues 345–365 (GGEIFPYLVVVIGLENVLVLT) form a helical membrane-spanning segment. Residues 366 to 401 (KSVVSTPVDLEVKLRIAQGLSSESWSIMKNMATELG) are Cytoplasmic-facing. A helical membrane pass occupies residues 402–422 (IVLIGYFTLVPAIQEFCLFAV). Residue V423 is a topological domain, lumenal. A helical transmembrane segment spans residues 424–444 (GLVSDFFLQMLFFTTVLSIDI). The Cytoplasmic segment spans residues 445–518 (RRMELADLNK…FLARTRLAQR (74 aa)). The ER export signal signature appears at 447–452 (MELADL). Glycyl lysine isopeptide (Lys-Gly) (interchain with G-Cter in ubiquitin) cross-links involve residues K454 and K466. A helical transmembrane segment spans residues 519–539 (LIMAGTVVWIGILVYTDPAGL). The segment at 535-710 (DPAGLRTYLA…QAQRDLTLYK (176 aa)) is loop-7. The Lumenal segment spans residues 540–707 (RTYLAAQVTE…GTAQAQRDLT (168 aa)). The tract at residues 581–618 (PPDASKLPENQTLPGEPPEPGGLAEGVHDSPAPEVTWG) is disordered. 2 N-linked (GlcNAc...) asparagine glycosylation sites follow: N590 and N641. The disordered stretch occupies residues 668-696 (EGRHPQDGRSAWPPPRPGQGGLWEAGPKG). The chain crosses the membrane as a helical span at residues 708–728 (LYKVAALGLASGIVLVLLLLC). The Cytoplasmic portion of the chain corresponds to 729–1278 (LYRVLCPRNY…YVPSVLEKLD (550 aa)). Positions 731 to 1278 (RVLCPRNYGQ…YVPSVLEKLD (548 aa)) are interaction with SREBF2. The stretch at 771–811 (VLRGHLMDIECLASDGMLLVSCCLAGHVCVWDAQTGDCLTR) is one WD 1 repeat. Phosphoserine occurs at positions 821, 837, 850, 905, and 935. Positions 834–904 (ERLSDGGKGG…RYRAGRRAQD (71 aa)) are disordered. WD repeat units follow at residues 951-1001 (PPEK…LRCS) and 1004-1041 (EVSS…ALSP). The residue at position 1050 (R1050) is an Omega-N-methylarginine. WD repeat units lie at residues 1076–1113 (AHQK…CLFT), 1116–1154 (GHSG…RVSH), 1157–1194 (AHRG…KLYS), and 1196–1234 (QQDL…LLQT).

Belongs to the WD repeat SCAP family. In terms of assembly, membrane region forms a homotetramer. Component of the SCAP-SREBP complex (composed of SCAP and SREBF1/SREBP1 or SREBF2/SREBP2); interacts with SREBF1/SREBP1 or SREBF2/SREBP2 through its C-terminal cytoplasmic domain. Forms a ternary complex with INSIG1 or INSIG2 through its transmembrane domains at high sterol concentrations. Interacts with PAQR3; the interaction anchors the SCAP-SREBP complex to the Golgi apparatus in low cholesterol conditions. Interacts with the SEC23-SEC24 complex in a SAR1-GTP-dependent manner through an ER export signal in its third cytoplasmic loop. Interacts with RNF139; the interaction inhibits the interaction of SCAP with SEC24B and hampering the ER to Golgi transport of the SCAP-SREBP complex. Interacts with SPRING1. Ubiquitinated at Lys-454 and Lys-466. RNF145 triggers ubiquitination of SCAP, likely inhibiting SCAP-SREBP complex transport to the Golgi apparatus and the subsequent processing/maturation of SREBF2/SREBP2.

Its subcellular location is the endoplasmic reticulum membrane. The protein localises to the golgi apparatus membrane. The protein resides in the cytoplasmic vesicle. It is found in the COPII-coated vesicle membrane. Functionally, escort protein required for cholesterol as well as lipid homeostasis. Regulates export of the SCAP-SREBP complex from the endoplasmic reticulum to the Golgi upon low cholesterol, thereby regulating the processing of sterol regulatory element-binding proteins (SREBPs) SREBF1/SREBP1 and SREBF2/SREBP2. At high sterol concentrations, formation of a ternary complex with INSIG (INSIG1 or INSIG2) leads to mask the ER export signal in SCAP, promoting retention of the complex in the endoplasmic reticulum. Low sterol concentrations trigger release of INSIG, a conformational change in the SSD domain of SCAP, unmasking of the ER export signal, promoting recruitment into COPII-coated vesicles and transport of the SCAP-SREBP to the Golgi: in the Golgi, SREBPs are then processed, releasing the transcription factor fragment of SREBPs from the membrane, its import into the nucleus and up-regulation of LDLR, INSIG1 and the mevalonate pathway. Binds cholesterol via its SSD domain. The protein is Sterol regulatory element-binding protein cleavage-activating protein of Bos taurus (Bovine).